Here is a 410-residue protein sequence, read N- to C-terminus: MAAVGAEARGAWCVPCLVSLDTLQELCRKEKLTCKSIGITKRNLNNYEVEYLCDYKVVKDMEYYLVKWKGWPDSTNTWEPLQNLKCPLLLQQFSNDKHNYLSQVKKGKAITPKDNNKTLKPAIAEYIVKKAKQRIALQRWQDELNRRKNHKGMIFVENTVDLEGPPSDFYYINEYKPAPGISLVNEATFGCSCTDCFFQKCCPAEAGVLLAYNKNQQIKIPPGTPIYECNSRCQCGPDCPNRIVQKGTQYSLCIFRTSNGRGWGVKTLVKIKRMSFVMEYVGEVITSEEAERRGQFYDNKGITYLFDLDYESDEFTVDAARYGNVSHFVNHSCDPNLQVFNVFIDNLDTRLPRIALFSTRTINAGEELTFDYQMKGSGDISSDSIDHSPAKKRVRTVCKCGAVTCRGYLN.

The Chromo domain maps to 47–105 (YEVEYLCDYKVVKDMEYYLVKWKGWPDSTNTWEPLQNLKCPLLLQQFSNDKHNYLSQVK). The 59-residue stretch at 189–247 (FGCSCTDCFFQKCCPAEAGVLLAYNKNQQIKIPPGTPIYECNSRCQCGPDCPNRIVQKG) folds into the Pre-SET domain. Zn(2+) is bound by residues cysteine 191, cysteine 193, cysteine 196, cysteine 201, cysteine 202, cysteine 229, cysteine 233, cysteine 235, and cysteine 239. Positions 250 to 373 (YSLCIFRTSN…AGEELTFDYQ (124 aa)) constitute an SET domain. Residues 261–263 (RGW) and 330–331 (NH) each bind S-adenosyl-L-methionine. Cysteine 333 provides a ligand contact to Zn(2+). Position 372 (tyrosine 372) interacts with S-adenosyl-L-methionine. Phosphoserine is present on residues serine 381, serine 384, and serine 388. Residues 394-410 (VRTVCKCGAVTCRGYLN) enclose the Post-SET domain. Cysteine 398 contacts Zn(2+). Lysine 399 is a binding site for S-adenosyl-L-methionine. Residues cysteine 400 and cysteine 405 each contribute to the Zn(2+) site.

Belongs to the class V-like SAM-binding methyltransferase superfamily. Histone-lysine methyltransferase family. Suvar3-9 subfamily. As to quaternary structure, interacts with SMAD5. The large PER complex involved in the histone methylation is composed of at least PER2, CBX3, TRIM28, SUV39H1 and/or SUV39H2; CBX3 mediates the formation of the complex. In terms of processing, ubiquitinated by the DCX(DCAF13) E3 ubiquitin ligase complex, leading to its degradation.

The protein resides in the nucleus. Its subcellular location is the chromosome. The protein localises to the centromere. It carries out the reaction L-lysyl(9)-[histone H3] + 3 S-adenosyl-L-methionine = N(6),N(6),N(6)-trimethyl-L-lysyl(9)-[histone H3] + 3 S-adenosyl-L-homocysteine + 3 H(+). Functionally, histone methyltransferase that specifically trimethylates 'Lys-9' of histone H3 using monomethylated H3 'Lys-9' as substrate. H3 'Lys-9' trimethylation represents a specific tag for epigenetic transcriptional repression by recruiting HP1 (CBX1, CBX3 and/or CBX5) proteins to methylated histones. Mainly functions in heterochromatin regions, thereby playing a central role in the establishment of constitutive heterochromatin at pericentric and telomere regions. H3 'Lys-9' trimethylation is also required to direct DNA methylation at pericentric repeats. SUV39H1 is targeted to histone H3 via its interaction with RB1 and is involved in many processes, such as cell cycle regulation, transcriptional repression and regulation of telomere length. May participate in regulation of higher-order chromatin organization during spermatogenesis. Recruited by the large PER complex to the E-box elements of the circadian target genes such as PER2 itself or PER1, contributes to the conversion of local chromatin to a heterochromatin-like repressive state through H3 'Lys-9' trimethylation. This is Histone-lysine N-methyltransferase SUV39H2 (SUV39H2) from Homo sapiens (Human).